The sequence spans 540 residues: SNW/SKI-interacting protein B (540 aa).

4 disordered regions span residues 1–106 (MVLR…SLTV), 215–273 (GETQ…NPKG), 351–402 (GAAP…RDRD), and 502–526 (ASVA…DPFH). Composition is skewed to basic and acidic residues over residues 16–29 (PHDH…KERY) and 83–94 (MGRRGGDGDGEQ). Residues 189 to 353 (PEFIKYTPAR…KARAEMLGAA (165 aa)) form an SNW region. Residues 236 to 251 (AGSPPVPVLRSPPRPP) show a composition bias toward pro residues. The segment covering 359–382 (ERSKAAAERDAIREERRRERRLEA) has biased composition (basic and acidic residues). The span at 383-393 (RAAAAAASKKS) shows a compositional bias: low complexity.

This sequence belongs to the SNW family.

It is found in the nucleus. The sequence is that of SNW/SKI-interacting protein B from Oryza sativa subsp. japonica (Rice).